The primary structure comprises 149 residues: MSRLRSLLSLILVLVTTVLVSCSSPQVEIPTTYSPEKIAQLQVYVNPIAVARDGMEKRLQGLIADQNWVDTQTYIHGPLGQLRRDMLGLASSLLPKDQDKAKTLAKEVFGHLERLDAAAKDRNGSQAKIQYQEALADFDSFLNLLPQAS.

The N-terminal stretch at 1–21 (MSRLRSLLSLILVLVTTVLVS) is a signal peptide. Cys22 is lipidated: N-palmitoyl cysteine. Residue Cys22 is the site of S-diacylglycerol cysteine attachment.

This sequence belongs to the PsbQ family. CyanoQ subfamily. As to quaternary structure, PSII is composed of 1 copy each of membrane proteins PsbA, PsbB, PsbC, PsbD, PsbE, PsbF, PsbH, PsbI, PsbJ, PsbK, PsbL, PsbM, PsbT, PsbX, PsbY, PsbZ, Psb30/Ycf12, peripheral proteins PsbO, CyanoQ (PsbQ), PsbU, PsbV and a large number of cofactors. It forms dimeric complexes. Pull-down experiments with His-tagged PsbQ pull down dimeric, but not monomeric, PSII. The N-terminus is blocked. Upon expression in E.coli the N-terminus is modified with a diacylglycerol and an acyl group bound to two palmitates and one palmitoleate.

The protein resides in the cellular thylakoid membrane. In terms of biological role, one of the extrinsic, lumenal subunits of photosystem II (PSII), which stabilize and protect the oxygen-evolving complex. PSII is a light-driven water plastoquinone oxidoreductase, using light energy to abstract electrons from H(2)O, generating a proton gradient subsequently used for ATP formation. Plays a role in the stability of the oxygen-evolving center on the luminal side of PSII. Required for optimal photoautotrophic growth in the absence of Ca(2+) or Cl(-), functions in optimizing PSII water oxidation/O(2) evolving activity. Requires PsbO to bind to PSII. The polypeptide is CyanoQ (Synechocystis sp. (strain ATCC 27184 / PCC 6803 / Kazusa)).